The sequence spans 69 residues: U-Asilidin(12)-Dg3a (69 aa).

A signal peptide spans 1 to 19; sequence MRFLNIFLFFAAIIAFATA. A propeptide spanning residues 20–33 is cleaved from the precursor; sequence SQVFEEDEIDMEPR. Disulfide bonds link Cys-36–Cys-59, Cys-45–Cys-65, and Cys-49–Cys-67.

The protein belongs to the asilidin-12 family. In terms of tissue distribution, expressed by the venom gland.

The protein localises to the secreted. In terms of biological role, moderately increases Kv11.1/KCNH2/ERG1 currents and shifts the voltage-dependence of the channel activation to hyperpolarised potentials. In vivo, induces neurotoxic effects when injected into insects (tested on L.cuprina and A.domesticus). This chain is U-Asilidin(12)-Dg3a, found in Dolopus genitalis (Giant Australian assassin fly).